The following is a 184-amino-acid chain: MKNITDSFLCLSYWPSAGSFGFDTDILATNLINLSVVLGVLVFFGKGVLTDLLDNRKQRILRTIRNSEELREGAVEQLEKARARLRKIEMEADRFRLNGYSEIEREKLNLINSIYTTLEQFENYKNETINFEQQKAINQVQQRVLQQALQGALGTLNSCLNNELHLRTIGANIGMFGAMKEKNN.

The chain crosses the membrane as a helical span at residues 27–49 (LATNLINLSVVLGVLVFFGKGVL).

Belongs to the ATPase B chain family. As to quaternary structure, F-type ATPases have 2 components, F(1) - the catalytic core - and F(0) - the membrane proton channel. F(1) has five subunits: alpha(3), beta(3), gamma(1), delta(1), epsilon(1). F(0) has four main subunits: a(1), b(1), b'(1) and c(10-14). The alpha and beta chains form an alternating ring which encloses part of the gamma chain. F(1) is attached to F(0) by a central stalk formed by the gamma and epsilon chains, while a peripheral stalk is formed by the delta, b and b' chains.

The protein resides in the plastid. The protein localises to the chloroplast thylakoid membrane. Its function is as follows. F(1)F(0) ATP synthase produces ATP from ADP in the presence of a proton or sodium gradient. F-type ATPases consist of two structural domains, F(1) containing the extramembraneous catalytic core and F(0) containing the membrane proton channel, linked together by a central stalk and a peripheral stalk. During catalysis, ATP synthesis in the catalytic domain of F(1) is coupled via a rotary mechanism of the central stalk subunits to proton translocation. Functionally, component of the F(0) channel, it forms part of the peripheral stalk, linking F(1) to F(0). This is ATP synthase subunit b, chloroplastic from Cicer arietinum (Chickpea).